Here is a 716-residue protein sequence, read N- to C-terminus: Fatty acid oxidation complex subunit alpha (716 aa).

The segment at 1-189 (MIYQSPTIQV…KVGAVDAVVA (189 aa)) is enoyl-CoA hydratase/isomerase. A substrate-binding site is contributed by Asp296. The interval 311-716 (KAVNSAAVLG…AANNGSYYQA (406 aa)) is 3-hydroxyacyl-CoA dehydrogenase. Residues Met324, Asp343, 400–402 (VVE), Lys407, and Ser429 each bind NAD(+). His450 acts as the For 3-hydroxyacyl-CoA dehydrogenase activity in catalysis. Asn453 lines the NAD(+) pocket. Residues Asn500 and Tyr660 each contribute to the substrate site.

The protein in the N-terminal section; belongs to the enoyl-CoA hydratase/isomerase family. This sequence in the C-terminal section; belongs to the 3-hydroxyacyl-CoA dehydrogenase family. Heterotetramer of two alpha chains (FadB) and two beta chains (FadA).

The enzyme catalyses a (3S)-3-hydroxyacyl-CoA + NAD(+) = a 3-oxoacyl-CoA + NADH + H(+). The catalysed reaction is a (3S)-3-hydroxyacyl-CoA = a (2E)-enoyl-CoA + H2O. It carries out the reaction a 4-saturated-(3S)-3-hydroxyacyl-CoA = a (3E)-enoyl-CoA + H2O. It catalyses the reaction (3S)-3-hydroxybutanoyl-CoA = (3R)-3-hydroxybutanoyl-CoA. The enzyme catalyses a (3Z)-enoyl-CoA = a 4-saturated (2E)-enoyl-CoA. The catalysed reaction is a (3E)-enoyl-CoA = a 4-saturated (2E)-enoyl-CoA. The protein operates within lipid metabolism; fatty acid beta-oxidation. Functionally, involved in the aerobic and anaerobic degradation of long-chain fatty acids via beta-oxidation cycle. Catalyzes the formation of 3-oxoacyl-CoA from enoyl-CoA via L-3-hydroxyacyl-CoA. It can also use D-3-hydroxyacyl-CoA and cis-3-enoyl-CoA as substrate. This Shewanella oneidensis (strain ATCC 700550 / JCM 31522 / CIP 106686 / LMG 19005 / NCIMB 14063 / MR-1) protein is Fatty acid oxidation complex subunit alpha.